The primary structure comprises 567 residues: Protein phosphatase 1 regulatory inhibitor subunit 16B (567 aa).

The stretch at 15–55 forms a coiled coil; that stretch reads EKVPTLERLRAAQKRRAQQLKKWAQYEQDLQHRKRKHERKR. Residue S69 is modified to Phosphoserine. ANK repeat units follow at residues 100-129, 133-162, 228-257, and 261-290; these read DGLT…NVNA, ELWT…DLLA, QGAT…RVDV, and DGWE…SLSA. Phosphoserine is present on residues S333, S337, and S350. The tract at residues 378-403 is disordered; it reads RTSTYNGDIRETRTDQENKDPNPRLE. Residues 385–403 show a composition bias toward basic and acidic residues; the sequence is DIRETRTDQENKDPNPRLE. S476 carries the phosphoserine modification. Over residues 504–515 the composition is skewed to polar residues; that stretch reads SSMARTGESSSE. Residues 504-525 are disordered; it reads SSMARTGESSSEGKAPLIGGRT. The stretch at 530–559 is one ANK 5 repeat; it reads SNGTSVYYTVTSGDPPLLKFKAPIEEMEEK. A lipid anchor (S-palmitoyl cysteine) is attached at C563. A Cysteine methyl ester modification is found at C564. Residue C564 is the site of S-farnesyl cysteine attachment. Residues 565 to 567 constitute a propeptide, removed in mature form; it reads RIS.

Interacts with PPP1CA, PPP1CB and MSN. Interacts (via its fourth ankyrin repeat) with the mature dimeric form of RPSA/LAMR1. Interacts with EEF1A1. Interacts with PTEN. Interacts with ECE1. Post-translationally, phosphorylated by PKA and, after PKA priming, by GSK3B. Phosphorylation by GSK3B reduces its association with PP1C and enhances PP1C activity. Dephosphorylation by its associated PP1C results in enhanced association with PP1C, but reduced PP1C activity.

The protein localises to the cell membrane. It localises to the nucleus. It is found in the cell projection. Regulator of protein phosphatase 1 (PP1) that acts as a positive regulator of pulmonary endothelial cell (EC) barrier function. Involved in the regulation of the PI3K/AKT signaling pathway, angiogenesis and endothelial cell proliferation. Regulates angiogenesis and endothelial cell proliferation through the control of ECE1 dephosphorylation, trafficking and activity. Protects the endothelial barrier from lipopolysaccharide (LPS)-induced vascular leakage. Involved in the regulation of endothelial cell filopodia extension. May be a downstream target for TGF-beta1 signaling cascade in endothelial cells. Involved in PKA-mediated moesin dephosphorylation which is important in EC barrier protection against thrombin stimulation. Promotes the interaction of PPP1CA with RPSA/LAMR1 and in turn facilitates the dephosphorylation of RPSA/LAMR1. Involved in the dephosphorylation of EEF1A1. The chain is Protein phosphatase 1 regulatory inhibitor subunit 16B (PPP1R16B) from Homo sapiens (Human).